The primary structure comprises 267 residues: MAPAADREGYWGPTTSTLDWCEENYSVTWYIAEFWNTVSNLIMIIPPMFGAVQSVRDGLEKRYIASYLALTVVGMGSWCFHMTLKYEMQLLDELPMIYSCCIFVYCMFECFKIKNSVNYHLLFTLVLFSLIVTTVYLKVKEPIFHQVMYGMLVFTLVLRSIYIVTWVYPWLRGLGYTSLGIFLLGFLFWNIDNIFCESLRNFRKKVPPIIGITTQFHAWWHILTGLGSYLHILFSLYTRTLYLRYRPKVKFLFGIWPVILFEPLRKH.

Residues 1-33 (MAPAADREGYWGPTTSTLDWCEENYSVTWYIAE) lie on the Cytoplasmic side of the membrane. 5 residues coordinate Ca(2+): Asp-19, Trp-20, Glu-22, Asn-24, and Glu-33. Residues 34–55 (FWNTVSNLIMIIPPMFGAVQSV) form a helical membrane-spanning segment. The Lumenal portion of the chain corresponds to 56–61 (RDGLEK). Residues 62–82 (RYIASYLALTVVGMGSWCFHM) form a helical membrane-spanning segment. A Zn(2+)-binding site is contributed by His-81. Residues 83 to 87 (TLKYE) lie on the Cytoplasmic side of the membrane. Residues 88–108 (MQLLDELPMIYSCCIFVYCMF) form a helical membrane-spanning segment. Residues 109–118 (ECFKIKNSVN) are Lumenal-facing. The chain crosses the membrane as a helical span at residues 119-139 (YHLLFTLVLFSLIVTTVYLKV). At 140–141 (KE) the chain is on the cytoplasmic side. Residues 142 to 162 (PIFHQVMYGMLVFTLVLRSIY) traverse the membrane as a helical segment. The Lumenal portion of the chain corresponds to 163 to 173 (IVTWVYPWLRG). The helical transmembrane segment at 174–194 (LGYTSLGIFLLGFLFWNIDNI) threads the bilayer. Residues 195–215 (FCESLRNFRKKVPPIIGITTQ) lie on the Cytoplasmic side of the membrane. Residues 216–236 (FHAWWHILTGLGSYLHILFSL) form a helical membrane-spanning segment. His-217 and His-221 together coordinate Zn(2+). Topologically, residues 237–267 (YTRTLYLRYRPKVKFLFGIWPVILFEPLRKH) are lumenal.

This sequence belongs to the alkaline ceramidase family. The cofactor is Zn(2+). In terms of tissue distribution, ubiquitously expressed. Highly expressed in placenta. Expressed in erythrocytes.

It is found in the endoplasmic reticulum membrane. The protein localises to the golgi apparatus membrane. It catalyses the reaction an N-acyl-(4R)-4-hydroxysphinganine + H2O = (4R)-hydroxysphinganine + a fatty acid. It carries out the reaction N-(5Z,8Z,11Z,14Z-eicosatetraenoyl)-sphing-4-enine + H2O = sphing-4-enine + (5Z,8Z,11Z,14Z)-eicosatetraenoate. The catalysed reaction is N-(5Z,8Z,11Z,14Z-eicosatetraenoyl)-sphinganine + H2O = sphinganine + (5Z,8Z,11Z,14Z)-eicosatetraenoate. The enzyme catalyses N-(5Z,8Z,11Z,14Z-eicosatetraenoyl)-(4R)-hydroxysphinganine + H2O = (4R)-hydroxysphinganine + (5Z,8Z,11Z,14Z)-eicosatetraenoate. It catalyses the reaction N-(11Z-eicosenoyl)-sphing-4-enine + H2O = (11Z)-eicosenoate + sphing-4-enine. It carries out the reaction N-(11Z-eicosenoyl)-sphinganine + H2O = (11Z)-eicosenoate + sphinganine. The catalysed reaction is N-(11Z-eicosenoyl)-(4R)-hydroxysphinganine + H2O = (11Z)-eicosenoate + (4R)-hydroxysphinganine. The enzyme catalyses N-(9Z-octadecenoyl)-sphing-4-enine + H2O = sphing-4-enine + (9Z)-octadecenoate. It catalyses the reaction N-(9Z-octadecenoyl)-sphinganine + H2O = sphinganine + (9Z)-octadecenoate. It carries out the reaction N-(9Z-octadecenoyl)-(4R)-hydroxysphinganine + H2O = (4R)-hydroxysphinganine + (9Z)-octadecenoate. The catalysed reaction is an N-acylsphing-4-enine + H2O = sphing-4-enine + a fatty acid. The enzyme catalyses an N-acylsphinganine + H2O = sphinganine + a fatty acid. It participates in lipid metabolism; sphingolipid metabolism. Its activity is regulated as follows. Activated by 5 mM Ca(2+) and inhibited by 5 mM Zn(2+). In terms of biological role, endoplasmic reticulum and Golgi ceramidase that catalyzes the hydrolysis of unsaturated long-chain C18:1-, C20:1- and C20:4-ceramides, dihydroceramides and phytoceramides into sphingoid bases like sphingosine and free fatty acids at alkaline pH. Ceramides, sphingosine, and its phosphorylated form sphingosine-1-phosphate are bioactive lipids that mediate cellular signaling pathways regulating several biological processes including cell proliferation, apoptosis and differentiation. Controls the generation of sphingosine in erythrocytes, and thereby sphingosine-1-phosphate in plasma. Through the regulation of ceramides and sphingosine-1-phosphate homeostasis in the brain may play a role in neurons survival and function. By regulating the levels of pro-inflammatory ceramides in immune cells and tissues, may modulate the inflammatory response. The sequence is that of Alkaline ceramidase 3 (ACER3) from Homo sapiens (Human).